The primary structure comprises 385 residues: Palmitoyl-[acyl-carrier-protein] 4-desaturase, chloroplastic (385 aa).

Residues 1–36 (MAMKLNALMTLQCPKRNMFTRIAPPQAGRVRSKVSM) constitute a chloroplast transit peptide. Residues glutamate 126, glutamate 164, histidine 167, glutamate 217, glutamate 250, and histidine 253 each coordinate Fe cation.

Belongs to the fatty acid desaturase type 2 family. Homodimer. Requires Fe(2+) as cofactor. Found only in tissues which synthesize petroselinic acid, such as developing seeds.

The protein resides in the plastid. Its subcellular location is the chloroplast. The enzyme catalyses hexadecanoyl-[ACP] + 2 reduced [2Fe-2S]-[ferredoxin] + O2 + 2 H(+) = (4Z)-hexadecenoyl-[ACP] + 2 oxidized [2Fe-2S]-[ferredoxin] + 2 H2O. In terms of biological role, converts palmitoyl-ACP to (4Z)-hexadec-4-enoyl-ACP by introduction of a cis double bond between carbons 4 and 5 of the acyl chain. This Coriandrum sativum (Coriander) protein is Palmitoyl-[acyl-carrier-protein] 4-desaturase, chloroplastic.